A 583-amino-acid polypeptide reads, in one-letter code: NEDD4-binding protein 2-like 2 (583 aa).

Residues 162–197 (NSEKSEIDNELFQFYKEIEELEKEKDGFENSCKESE) adopt a coiled-coil conformation. Residues 549 to 575 (EPSHKSTQRPPPPQGRQRWGGSLGSHN) are disordered.

This is NEDD4-binding protein 2-like 2 (N4BP2L2) from Homo sapiens (Human).